A 662-amino-acid chain; its full sequence is Biosynthetic arginine decarboxylase (662 aa).

Lysine 127 carries the post-translational modification N6-(pyridoxal phosphate)lysine. A substrate-binding site is contributed by 307–317 (FDVGGGLGVDY).

Belongs to the Orn/Lys/Arg decarboxylase class-II family. SpeA subfamily. Homotetramer. Mg(2+) serves as cofactor. Pyridoxal 5'-phosphate is required as a cofactor.

The protein localises to the periplasm. The catalysed reaction is L-arginine + H(+) = agmatine + CO2. Its pathway is amine and polyamine biosynthesis; agmatine biosynthesis; agmatine from L-arginine: step 1/1. Functionally, catalyzes the biosynthesis of agmatine from arginine. In Shigella flexneri, this protein is Biosynthetic arginine decarboxylase.